Reading from the N-terminus, the 1154-residue chain is CRISPR-associated endoribonuclease Cas13a (1154 aa).

HEPN-like fold regions lie at residues 330 to 466 and 923 to 1154; these read TTSN…RFIN and FVHL…EMKK.

This sequence belongs to the CRISPR-associated endoribonuclease Cas13a family. The cofactor is a divalent metal cation.

With respect to regulation, target RNA acts as an activator for non-specific ssRNA degradation. CRISPR (clustered regularly interspaced short palindromic repeat), is an adaptive immune system that provides protection against mobile genetic elements (viruses, transposable elements and conjugative plasmids). CRISPR clusters contain sequences complementary to antecedent mobile elements and target invading nucleic acids. Unlike many single-component effectors, this CRISPR-Cas system targets RNA. CRISPR clusters are transcribed from pre-CRISPR RNA (crRNA) and processed into crRNA by this protein. Cleaves linear target ssRNA in a pre-crRNA-dependent fashion, preferentially before U residues. Binding a viable target RNA target activates this protein for non-specific RNA degradation in vitro (called collateral RNA degradation), which is fairly sensitive as it requires picomolar levels of viable target RNA. This is CRISPR-associated endoribonuclease Cas13a from Paludibacter propionicigenes (strain DSM 17365 / JCM 13257 / WB4).